A 600-amino-acid polypeptide reads, in one-letter code: Rhesus-like glycoprotein B (600 aa).

Over 1–16 the chain is Cytoplasmic; the sequence is MSKDEHKLPLSKRKES. The helical transmembrane segment at 17-37 threads the bilayer; it reads IIFMMILFAFQVFMVVLFSVW. At 38-73 the chain is on the extracellular side; that stretch reads VRYSKNEVNYSTLTPEQLQELEATGGVVQEEVTNIY. N-linked (GlcNAc...) asparagine glycosylation is present at asparagine 46. The helical transmembrane segment at 74–94 threads the bilayer; the sequence is GYFRDINIMIFFGFGFLMTFL. At 95–102 the chain is on the cytoplasmic side; it reads RRYGYSAL. The chain crosses the membrane as a helical span at residues 103–123; that stretch reads GYTFIISALVAQWSVLIYGFF. Residues 124 to 145 lie on the Extracellular side of the membrane; that stretch reads ETVDHKNDHGGDYASTFEMSQT. The helical transmembrane segment at 146 to 166 threads the bilayer; that stretch reads VLLQGLFCAGAVMISYGAVLG. Topologically, residues 167 to 170 are cytoplasmic; it reads RVTP. The chain crosses the membrane as a helical span at residues 171 to 191; it reads LQMLVVGIFEPIFYFLNMFIG. The Extracellular segment spans residues 192-199; sequence EMNLEAID. Residues 200 to 220 traverse the membrane as a helical segment; that stretch reads VGGGMYIHLFGSVFGLTIAWF. Over 221–240 the chain is Cytoplasmic; that stretch reads LTDKKSKDCEDNSPSYTGDY. A helical membrane pass occupies residues 241–261; it reads FAMAGTLFLWMMWPSFNAAIA. Over 262-274 the chain is Extracellular; that stretch reads PLGEPQFRAIANT. Residues 275 to 295 traverse the membrane as a helical segment; it reads FLSLTASTIATFIVTRLFGHL. The Cytoplasmic segment spans residues 296–303; it reads GHKIDMVH. Residues 304-323 form a helical membrane-spanning segment; it reads VQNSSLAGGVVQGCLAHMNI. The Extracellular segment spans residues 324–325; sequence NP. Residues 326–346 form a helical membrane-spanning segment; it reads GGAIGMGFLAGVISVIGYLFI. The Cytoplasmic segment spans residues 347–361; the sequence is SPFLQRRFNIQDTCG. A helical transmembrane segment spans residues 362–382; sequence IHNLHFMPGFIGSIAACIAAW. Residues 383 to 411 are Extracellular-facing; it reads KGLNDRSLYNPIEFNQIFRAGEDQARNNA. The helical transmembrane segment at 412-432 threads the bilayer; the sequence is AATFISIGIAIAGGLFVGMIL. At 433–600 the chain is on the cytoplasmic side; it reads KALKKVGGLK…SSTNSPTSKV (168 aa). The interval 471–600 is disordered; sequence NLPMPTTDNG…SSTNSPTSKV (130 aa). Residues 498–510 are compositionally biased toward basic and acidic residues; the sequence is NKKENGYRRDLIR. Over residues 519–529 the composition is skewed to low complexity; the sequence is EQSTDSSYSDS. Residues 540–554 show a composition bias toward basic residues; that stretch reads RIRKLAKKSYRRSKK. Basic and acidic residues predominate over residues 555-566; sequence SHSEHQPQHQPE. The span at 571-580 shows a compositional bias: low complexity; sequence NNNNNNNNNN. A compositionally biased stretch (polar residues) spans 581-600; the sequence is ATAETTDNGGSSTNSPTSKV.

This sequence belongs to the ammonium transporter (TC 2.A.49) family. Rh subfamily.

It localises to the membrane. May be a carbon dioxide/bicarbonate transporter. In Dictyostelium discoideum (Social amoeba), this protein is Rhesus-like glycoprotein B (rhgB).